We begin with the raw amino-acid sequence, 177 residues long: Probable prophage lysozyme (177 aa).

The active-site Proton donor is glutamate 35. The active-site Nucleophile is aspartate 44.

The protein belongs to the glycosyl hydrolase 24 family.

The catalysed reaction is Hydrolysis of (1-&gt;4)-beta-linkages between N-acetylmuramic acid and N-acetyl-D-glucosamine residues in a peptidoglycan and between N-acetyl-D-glucosamine residues in chitodextrins.. In terms of biological role, essential for lysis of bacterial cell wall, by showing cell wall hydrolyzing activity. This chain is Probable prophage lysozyme (rrrQ), found in Escherichia coli (strain K12).